The following is a 2162-amino-acid chain: Polyketide synthase 1 (2162 aa).

Residues 19–264 are N-terminal acylcarrier protein transacylase domain (SAT); the sequence is FVFGDQTSCN…TPLAVHAPYH (246 aa). The 445-residue stretch at 397–841 folds into the Ketosynthase family 3 (KS3) domain; sequence DSKIAIIGMS…GGNTALLVED (445 aa). Catalysis depends on for beta-ketoacyl synthase activity residues Cys578, His713, and His757. The interval 941 to 1245 is malonyl-CoA:ACP transacylase (MAT) domain; the sequence is AFVFSGQGSQ…PSLMRSHDGW (305 aa). The active-site For acyl/malonyl transferase activity is Ser1030. The product template (PT) domain stretch occupies residues 1322–1636; the sequence is TASVHRIVRE…RRVLDAAMPA (315 aa). The segment at 1326–1459 is N-terminal hotdog fold; it reads HRIVRESVDR…SSLCFGESRA (134 aa). One can recognise a PKS/mFAS DH domain in the interval 1326 to 1631; the sequence is HRIVRESVDR…FQGVPRRVLD (306 aa). The active-site Proton acceptor; for dehydratase activity is His1358. The C-terminal hotdog fold stretch occupies residues 1486–1631; it reads LNSRLSSGVI…FQGVPRRVLD (146 aa). The active-site Proton donor; for dehydratase activity is Asp1545. The disordered stretch occupies residues 1633-1669; sequence AMPAPKSPNKTRDHASPNATISRAKPPQGSSPASSAQ. The segment covering 1658–1669 has biased composition (low complexity); it reads PPQGSSPASSAQ. In terms of domain architecture, Carrier 1 spans 1692-1766; it reads IDPMHAVLRI…DFAVHLGLDT (75 aa). O-(pantetheine 4'-phosphoryl)serine is present on Ser1726. Residues 1772–1783 show a composition bias toward low complexity; the sequence is SSGESNVSGGVS. Residues 1772-1809 are disordered; the sequence is SSGESNVSGGVSPRSDSVAAMSSDVTTPPAQSPLGSMS. Positions 1794–1809 are enriched in polar residues; that stretch reads SDVTTPPAQSPLGSMS. The Carrier 2 domain maps to 1807–1884; the sequence is SMSSSPCEDL…SFKHVFEQEI (78 aa). Residue Ser1844 is modified to O-(pantetheine 4'-phosphoryl)serine. The segment at 1896-2160 is thioesterase (TE) domain; that stretch reads LKKYHATSTL…ERVAAFIRSA (265 aa). Ser1987 (for thioesterase activity) is an active-site residue.

Functionally, polyketide synthase; part of the Pks1 gene cluster that mediates the biosynthesis of an anthraquinone derivative pigment that contributes to conidial pigmentation that provides protection from UV radiation, heat and cold stress. The polyketide synthase Pks1 produces 1-acetyl-2,4,6,8-tetrahydroxy-9,10-anthraquinone though condensation of acetyl-CoA with malonyl-CoA. The dehydratase EthD and the laccase Mlac1 further convert the anthraquinone derivative into the final conidial pigment. This is Polyketide synthase 1 from Metarhizium album (strain ARSEF 1941).